A 1547-amino-acid chain; its full sequence is Fatty acid synthase subunit alpha (1547 aa).

The interval 94-121 is disordered; sequence TLPEAHPPPPIDSHQEPSTQTQATHRSA. Residues 109–118 are compositionally biased toward polar residues; that stretch reads EPSTQTQATH. The region spanning 145-221 is the Carrier domain; sequence LPVSTIVRSL…ETMSIGHNGR (77 aa). Residue serine 180 is modified to O-(pantetheine 4'-phosphoryl)serine. Residues 563–798 form a ketoreductase (KR) domain region; the sequence is GKNVLITGAG…ATLMGGTITT (236 aa). Positions 1004-1476 constitute a Ketosynthase family 3 (KS3) domain; sequence KESLQEIVLQ…QKGSQAILIH (473 aa). Catalysis depends on for beta-ketoacyl synthase activity residues cysteine 1190 and histidine 1442.

This sequence belongs to the thiolase-like superfamily. Fungal fatty acid synthetase subunit alpha family. Requires pantetheine 4'-phosphate as cofactor.

The catalysed reaction is acetyl-CoA + n malonyl-CoA + 2n NADPH + 4n H(+) = a long-chain-acyl-CoA + n CoA + n CO2 + 2n NADP(+).. It catalyses the reaction a fatty acyl-[ACP] + malonyl-[ACP] + H(+) = a 3-oxoacyl-[ACP] + holo-[ACP] + CO2. It carries out the reaction a (3R)-hydroxyacyl-[ACP] + NADP(+) = a 3-oxoacyl-[ACP] + NADPH + H(+). The protein operates within mycotoxin biosynthesis; HC-toxin biosynthesis. In terms of biological role, fatty acid synthase alpha subunit, part of the diffuse TOX2 gene cluster that mediates the biosynthesis of the HC-toxin, cyclic tetrapeptide of structure cyclo(D-Pro-L-Ala-D-Ala-L-Aeo), where Aeo stands for 2-amino-9,10-epoxi-8-oxodecanoic acid. HC-toxin is a determinant of specificity and virulence in the interaction between the producing fungus and its host, maize. TOXH contribute to the synthesis of the decanoic backbone of 2-amino-9,10-epoxi-8-oxodecanoic acid, an essential precursor for the production of the major forms of HC-toxin by the non-ribosomal peptide synthetase HTS1. The polypeptide is Fatty acid synthase subunit alpha (Cochliobolus carbonum (Maize leaf spot fungus)).